The primary structure comprises 423 residues: NADH-quinone oxidoreductase subunit F (423 aa).

54–63 (GRGGAGFSTG) provides a ligand contact to NAD(+). Residue 166 to 213 (GAGAYICGEETALLESLEGKKGMPRLKPPFPAGFGLYGCPTTINNVES) participates in FMN binding. Residues Cys344, Cys347, Cys350, and Cys390 each coordinate [4Fe-4S] cluster.

It belongs to the complex I 51 kDa subunit family. FMN serves as cofactor. The cofactor is [4Fe-4S] cluster.

The enzyme catalyses a quinone + NADH + 5 H(+)(in) = a quinol + NAD(+) + 4 H(+)(out). Its function is as follows. NDH-1 shuttles electrons from NADH, via FMN and iron-sulfur (Fe-S) centers, to quinones in the respiratory chain. Couples the redox reaction to proton translocation (for every two electrons transferred, four hydrogen ions are translocated across the cytoplasmic membrane), and thus conserves the redox energy in a proton gradient. The polypeptide is NADH-quinone oxidoreductase subunit F (nuoF) (Rickettsia akari (strain Hartford)).